Reading from the N-terminus, the 492-residue chain is Osmoregulated proline transporter OpuE (492 aa).

Helical transmembrane passes span 3–23 (IEII…GWYA), 40–60 (LGPF…WMLM), 62–82 (VPGA…GLTI), 125–145 (IVSA…GMVS), 161–181 (GLFL…FLAV), 190–210 (AIMF…VGGV), 224–244 (LLDI…AWGL), 271–291 (IGMS…LIGV), 314–334 (ILFH…AIMS), 365–385 (LVMI…LLSL), 394–414 (LVGY…LLSL), 424–444 (ALAA…TGLA), and 449–469 (VYEI…VSMI).

Belongs to the sodium:solute symporter (SSF) (TC 2.A.21) family.

The protein localises to the cell membrane. It catalyses the reaction L-proline(in) + Na(+)(in) = L-proline(out) + Na(+)(out). Catalyzes the uptake of extracellular proline under high-osmolarity growth conditions. Essential for the use of proline present in the environment as an osmoprotectant. This is Osmoregulated proline transporter OpuE from Bacillus subtilis (strain 168).